The sequence spans 421 residues: Synaptotagmin-1 (421 aa).

The Vesicular portion of the chain corresponds to 1–57 (MVSASHPEALAAPVTTVATLVPHNATEPASPGEGKEDAFSKLKQKFMNELHKIPLPP). Asparagine 24 carries an N-linked (GlcNAc...) asparagine glycan. A helical transmembrane segment spans residues 58-79 (WALIAIAIVAVLLVVTCCFCVC). 5 S-palmitoyl cysteine lipidation sites follow: cysteine 74, cysteine 75, cysteine 77, cysteine 79, and cysteine 82. Residues 80–421 (KKCLFKKKNK…EVDAMLAVKK (342 aa)) lie on the Cytoplasmic side of the membrane. Residues 112–141 (TMKDQALKDDDAETGLTDGEEKEEPKEEEK) form a disordered region. Over residues 121–133 (DDAETGLTDGEEK) the composition is skewed to acidic residues. Threonine 128 carries the phosphothreonine modification. The segment at 135–381 (EPKEEEKLGK…AIGKVFVGYN (247 aa)) is phospholipid binding. In terms of domain architecture, C2 1 spans 141-260 (KLGKLQYSLD…DFGHVTEEWR (120 aa)). Ca(2+) is bound by residues leucine 171, aspartate 172, and aspartate 178. Tyrosine 229 bears the Phosphotyrosine mark. 6 residues coordinate Ca(2+): aspartate 230, phenylalanine 231, aspartate 232, serine 235, lysine 236, and aspartate 238. Serine 264 bears the Phosphoserine mark. One can recognise a C2 2 domain in the interval 272 to 405 (KLGDICFSLR…NPRRPIAQWH (134 aa)). The Ca(2+) site is built by aspartate 303 and aspartate 309. 2 positions are modified to phosphoserine: serine 342 and serine 344. Residues aspartate 363, aspartate 365, and aspartate 371 each contribute to the Ca(2+) site.

Belongs to the synaptotagmin family. As to quaternary structure, homotetramer. Heterodimer; heterodimerizes with SYT2 in presence of calcium. Interacts with SCAMP5. Interacts with STON2. Forms a complex with SV2B, syntaxin 1 and SNAP25. Interacts with SV2A, SV2B and SV2C. Interacts with RIMS1. Interacts with PRRT2. Interacts with DNAJC5 in a phosphorylation-dependent manner. Interacts (via N-terminus) with RAB3A. Interacts with SYT12. Interacts with calmodulin. Interacts with DNM1 (via C-terminal proline-rich domain (PRD)); this interaction facilitates vesicle fission during clathrin-mediated endocytosis (CME). (Microbial infection) Interacts with C.botulinum neurotoxin type B (BoNT/B, botB). Has lower affinity for BoNT/B than Syt2; mutating its residues to match those in Syt2 increases its affinity. In terms of assembly, (Microbial infection) Interacts with C.botulinum neurotoxin type G (BoNT/G, botG). Ca(2+) serves as cofactor. Post-translationally, glycosylated. As to expression, expressed in the brain (at protein level). Predominantly expressed in rostral, phylogenetically younger brain regions, and in some endocrine tissues.

The protein localises to the cytoplasmic vesicle. It is found in the secretory vesicle membrane. It localises to the secretory vesicle. Its subcellular location is the synaptic vesicle membrane. The protein resides in the chromaffin granule membrane. The protein localises to the cytoplasm. Its function is as follows. Calcium sensor that participates in triggering neurotransmitter release at the synapse. May have a regulatory role in the membrane interactions during trafficking of synaptic vesicles at the active zone of the synapse. It binds acidic phospholipids with a specificity that requires the presence of both an acidic head group and a diacyl backbone. A Ca(2+)-dependent interaction between synaptotagmin and putative receptors for activated protein kinase C has also been reported. It can bind to at least three additional proteins in a Ca(2+)-independent manner; these are neurexins, syntaxin and AP2. Plays a role in dendrite formation by melanocytes. In terms of biological role, (Microbial infection) Receptor for C.botulinum neurotoxin type B (BoNT/B, botB); interaction is improved in the presence of gangliosides. BoNT/B toxin binds to the membrane proximal vesicular domain of Syt1 (residues 32-51). Functionally, (Microbial infection) Receptor for C.botulinum neurotoxin type G (BoNT/G, botG); unlike the case with BoNT/B, interaction is not improved in the presence of gangliosides. BoNT/G toxin binds to the vesicular domain of Syt1 (residues 32-53). This Rattus norvegicus (Rat) protein is Synaptotagmin-1.